We begin with the raw amino-acid sequence, 372 residues long: Putative glutamate--cysteine ligase 2 (372 aa).

The protein belongs to the glutamate--cysteine ligase type 2 family. YbdK subfamily.

It catalyses the reaction L-cysteine + L-glutamate + ATP = gamma-L-glutamyl-L-cysteine + ADP + phosphate + H(+). In terms of biological role, ATP-dependent carboxylate-amine ligase which exhibits weak glutamate--cysteine ligase activity. The sequence is that of Putative glutamate--cysteine ligase 2 from Gloeobacter violaceus (strain ATCC 29082 / PCC 7421).